A 340-amino-acid polypeptide reads, in one-letter code: CMP-N-acetylneuraminate-beta-galactosamide-alpha-2,3-sialyltransferase 1 (340 aa).

At 1–13 the chain is on the cytoplasmic side; that stretch reads MVTLRKRTLKVLT. The helical; Signal-anchor for type II membrane protein transmembrane segment at 14-34 threads the bilayer; sequence FLVLFIFLTSFFLNYSHTMVA. Residues 35-340 are Lumenal-facing; that stretch reads TTWFPKQMVL…INKIRIFKGR (306 aa). 3 disulfide bridges follow: cysteine 59–cysteine 64, cysteine 61–cysteine 139, and cysteine 142–cysteine 281. The N-linked (GlcNAc...) asparagine glycan is linked to asparagine 79. Glutamine 105 contributes to the substrate binding site. The N-linked (GlcNAc...) asparagine glycan is linked to asparagine 114. The substrate site is built by asparagine 147 and asparagine 170. Residue asparagine 201 is glycosylated (N-linked (GlcNAc...) asparagine). Substrate contacts are provided by tyrosine 230, tyrosine 266, glycine 270, glycine 290, histidine 299, and histidine 316. N-linked (GlcNAc...) asparagine glycosylation occurs at asparagine 323.

It belongs to the glycosyltransferase 29 family. Post-translationally, the soluble form derives from the membrane form by proteolytic processing.

The protein localises to the golgi apparatus. It is found in the golgi stack membrane. It localises to the trans-Golgi network membrane. The protein resides in the secreted. It carries out the reaction a beta-D-galactosyl-(1-&gt;3)-N-acetyl-alpha-D-galactosaminyl derivative + CMP-N-acetyl-beta-neuraminate = an N-acetyl-alpha-neuraminyl-(2-&gt;3)-beta-D-galactosyl-(1-&gt;3)-N-acetyl-alpha-D-galactosaminyl derivative + CMP + H(+). It catalyses the reaction a ganglioside GM1 + CMP-N-acetyl-beta-neuraminate = a ganglioside GD1a + CMP + H(+). The enzyme catalyses a ganglioside GM1 (d18:1(4E)) + CMP-N-acetyl-beta-neuraminate = a ganglioside GD1a (d18:1(4E)) + CMP + H(+). The catalysed reaction is ganglioside GM1 (d18:1(4E)/18:0) + CMP-N-acetyl-beta-neuraminate = ganglioside GD1a (18:1(4E)/18:0) + CMP + H(+). It carries out the reaction a ganglioside GA1 + CMP-N-acetyl-beta-neuraminate = a ganglioside GM1b + CMP + H(+). It catalyses the reaction a ganglioside GA1 (d18:1(4E)) + CMP-N-acetyl-beta-neuraminate = a ganglioside GM1b (d18:1(4E)) + CMP + H(+). The enzyme catalyses a ganglioside GD1b + CMP-N-acetyl-beta-neuraminate = a ganglioside GT1b + CMP + H(+). The catalysed reaction is a 3-O-[beta-D-galactosyl-(1-&gt;3)-N-acetyl-alpha-D-galactosaminyl]-L-threonyl-[protein] + CMP-N-acetyl-beta-neuraminate = a 3-O-[N-acetyl-alpha-neuraminyl-(2-&gt;3)-beta-D-galactosyl-(1-&gt;3)-N-acetyl-alpha-D-galactosaminyl]-L-threonyl-[protein] + CMP + H(+). It carries out the reaction a 3-O-[beta-D-galactosyl-(1-&gt;3)-N-acetyl-alpha-D-galactosaminyl]-L-seryl-[protein] + CMP-N-acetyl-beta-neuraminate = 3-O-[N-acetyl-alpha-neuraminyl-(2-&gt;3)-beta-D-galactosyl-(1-&gt;3)-N-acetyl-alpha-D-galactosaminyl]-L-seryl-[protein] + CMP + H(+). The protein operates within protein modification; protein glycosylation. It functions in the pathway glycolipid biosynthesis. Functionally, a beta-galactoside alpha2-&gt;3 sialyltransferase involved in terminal sialylation of glycoproteins and glycolipids. Catalyzes the transfer of sialic acid (N-acetyl-neuraminic acid; Neu5Ac) from the nucleotide sugar donor CMP-Neu5Ac onto acceptor Galbeta-(1-&gt;3)-GalNAc-terminated glycoconjugates through an alpha2-3 linkage. Adds sialic acid to the core 1 O-glycan, Galbeta-(1-&gt;3)-GalNAc-O-Ser/Thr, which is a major structure of mucin-type O-glycans. As part of a homeostatic mechanism that regulates CD8-positive T cell numbers, sialylates core 1 O-glycans of T cell glycoproteins, SPN/CD43 and PTPRC/CD45. Prevents premature apoptosis of thymic CD8-positive T cells prior to peripheral emigration, whereas in the secondary lymphoid organs controls the survival of CD8-positive memory T cells generated following a successful immune response. Transfers sialic acid to asialofetuin, presumably onto Galbeta-(1-&gt;3)-GalNAc-O-Ser. Sialylates GM1a, GA1 and GD1b gangliosides to form GD1a, GM1b and GT1b, respectively. The chain is CMP-N-acetylneuraminate-beta-galactosamide-alpha-2,3-sialyltransferase 1 (ST3GAL1) from Pan troglodytes (Chimpanzee).